The chain runs to 183 residues: Adenine phosphoribosyltransferase (183 aa).

The protein belongs to the purine/pyrimidine phosphoribosyltransferase family. Homodimer.

It localises to the cytoplasm. The catalysed reaction is AMP + diphosphate = 5-phospho-alpha-D-ribose 1-diphosphate + adenine. Its pathway is purine metabolism; AMP biosynthesis via salvage pathway; AMP from adenine: step 1/1. Functionally, catalyzes a salvage reaction resulting in the formation of AMP, that is energically less costly than de novo synthesis. The chain is Adenine phosphoribosyltransferase from Photorhabdus laumondii subsp. laumondii (strain DSM 15139 / CIP 105565 / TT01) (Photorhabdus luminescens subsp. laumondii).